The following is a 1212-amino-acid chain: Nucleolar protein 6 (1212 aa).

2 disordered regions span residues 1 to 72 and 1156 to 1212; these read MGKI…PVSI and KREQ…KSLS. The segment covering 1197–1212 has biased composition (basic residues); that stretch reads LKRKSLIKSRPLKSLS.

It belongs to the NRAP family. In terms of assembly, part of the small subunit (SSU) processome, composed of more than 70 proteins and the RNA chaperone small nucleolar RNA (snoRNA) U3.

Its subcellular location is the nucleus. It is found in the nucleolus. The protein localises to the chromosome. Part of the small subunit (SSU) processome, first precursor of the small eukaryotic ribosomal subunit. During the assembly of the SSU processome in the nucleolus, many ribosome biogenesis factors, an RNA chaperone and ribosomal proteins associate with the nascent pre-rRNA and work in concert to generate RNA folding, modifications, rearrangements and cleavage as well as targeted degradation of pre-ribosomal RNA by the RNA exosome. This chain is Nucleolar protein 6, found in Drosophila pseudoobscura pseudoobscura (Fruit fly).